Consider the following 87-residue polypeptide: Large ribosomal subunit protein bL31B (87 aa).

This sequence belongs to the bacterial ribosomal protein bL31 family. Type B subfamily. In terms of assembly, part of the 50S ribosomal subunit.

This Klebsiella pneumoniae (strain 342) protein is Large ribosomal subunit protein bL31B.